Consider the following 313-residue polypeptide: Protein HEXIM2 (313 aa).

Residues 1 to 13 show a composition bias toward polar residues; it reads MATVNHTNCNTAS. A disordered region spans residues 1 to 78; it reads MATVNHTNCN…RGSRTQSPGG (78 aa). Phosphoserine occurs at positions 28, 52, 75, and 80. The span at 64–77 shows a compositional bias: polar residues; sequence SSCNIRGSRTQSPG. Disordered stretches follow at residues 111–139, 155–194, and 267–313; these read EKQQ…PLAP, PNLD…DFSE, and QENE…AGDR. Positions 112-131 are enriched in basic and acidic residues; sequence KQQRDERQSQRASRVREEMF. The interval 139–142 is interaction with P-TEFb; sequence PYNT. Basic and acidic residues predominate over residues 179 to 194; that stretch reads GQGRAHGEFQQRDFSE. A coiled-coil region spans residues 207–276; that stretch reads RSKQELVRDY…QENEMWNREG (70 aa). The interaction with CCNT1, HEXIM1 and HEXIM2 stretch occupies residues 225 to 286; that stretch reads QAEQETRRLR…GYCDQEKPAS (62 aa).

The protein belongs to the HEXIM family. As to quaternary structure, homooligomer and heterooligomer with HEXIM1; probably dimeric. Core component of the 7SK RNP complex, at least composed of 7SK RNA, LARP7, MEPCE, HEXIM1 (or HEXIM2) and P-TEFb (composed of CDK9 and CCNT1/cyclin-T1). Interacts with CCNT2.

It is found in the nucleus. Functionally, transcriptional regulator which functions as a general RNA polymerase II transcription inhibitor. Core component of the 7SK RNP complex: in cooperation with 7SK snRNA sequesters P-TEFb in a large inactive 7SK snRNP complex preventing RNA polymerase II phosphorylation and subsequent transcriptional elongation. This chain is Protein HEXIM2 (Hexim2), found in Mus musculus (Mouse).